The following is a 133-amino-acid chain: Homeobox protein HD-5 (133 aa).

The segment at residues 34-93 is a DNA-binding region (homeobox); sequence SKRSRLKLSGQQIDVLESNFKIDSHPNSATKSLLSNALSIPLKNIQIWFQNRRAKEKTAR. The disordered stretch occupies residues 86-109; sequence RAKEKTARDGGRRRSGNAEIEDGE.

It is found in the nucleus. This Encephalitozoon cuniculi (strain GB-M1) (Microsporidian parasite) protein is Homeobox protein HD-5 (HD-5).